A 177-amino-acid polypeptide reads, in one-letter code: Large ribosomal subunit protein uL6 (177 aa).

This sequence belongs to the universal ribosomal protein uL6 family. As to quaternary structure, part of the 50S ribosomal subunit.

Its function is as follows. This protein binds to the 23S rRNA, and is important in its secondary structure. It is located near the subunit interface in the base of the L7/L12 stalk, and near the tRNA binding site of the peptidyltransferase center. The polypeptide is Large ribosomal subunit protein uL6 (Rickettsia peacockii (strain Rustic)).